The chain runs to 639 residues: MIHITLPDGSQREFAGPVTVAEVAASIGSGLAKAALAGKIGDKVVDTSYQITQDSPLSIVTAKDADGLEVIRHSTAHLLAYAVKELFPDAQVTIGPVIENGFYYDFSYKRPFTPEDLAAIEKRMAELAAKDEPVVRRVLPRDEAVAYFKGLGEHYKAEIIASIPTNEDVSLYREGGFEDLCRGPHVPSTGKLKFFKLMKVAGAYWRGDHRNEMLQRVYGTAWATKEELQQYLHMLEEAEKRDHRKLGRELDLFHIDEHSPGTVFWHPKGWTLWQEVEQYMRRVYRDNGYQEVKGPQILDKTLWEKTGHWDKYRDNMFTTESEKRDYALKPMNCPGHILIFKQGIKSYRDLPLRYGEFGQCHRNEPTGGLHGIMRVRGFTQDDGHIFCTEDHILAECTAYTALLQKVYKNFGFHNIIYKVATRPEARIGSDESWDKAEHALMESLRASGCEFEIAPGDGAFYGPKIEYTLKDAIGRQWQCGTMQVDFSMPERLDAEYVGEDGGRHRPVMLHRAIVGSLERFIGILIEEHAGALPVWLAPVQVAVLNITDAQQDYCREIAAKLQKALPNQGLRVVTDLRNEKITYKIREHSLQKLPYILVAGDKEKAAGAVAVRARGNKDLGVMSLDAFVDLIAQDIASKV.

The TGS domain maps to 1–61 (MIHITLPDGS…TQDSPLSIVT (61 aa)). The tract at residues 242 to 533 (DHRKLGRELD…LIEEHAGALP (292 aa)) is catalytic. Zn(2+) is bound by residues cysteine 333, histidine 384, and histidine 510.

It belongs to the class-II aminoacyl-tRNA synthetase family. In terms of assembly, homodimer. Requires Zn(2+) as cofactor.

The protein localises to the cytoplasm. The enzyme catalyses tRNA(Thr) + L-threonine + ATP = L-threonyl-tRNA(Thr) + AMP + diphosphate + H(+). Its function is as follows. Catalyzes the attachment of threonine to tRNA(Thr) in a two-step reaction: L-threonine is first activated by ATP to form Thr-AMP and then transferred to the acceptor end of tRNA(Thr). Also edits incorrectly charged L-seryl-tRNA(Thr). The sequence is that of Threonine--tRNA ligase from Acidovorax ebreus (strain TPSY) (Diaphorobacter sp. (strain TPSY)).